The sequence spans 298 residues: N-acetylmuramic acid 6-phosphate etherase (298 aa).

Residues 55 to 218 enclose the SIS domain; the sequence is IHAQVSGGGR…STGLMIKSGK (164 aa). Residue Glu-83 is the Proton donor of the active site. The active site involves Glu-114.

This sequence belongs to the GCKR-like family. MurNAc-6-P etherase subfamily. Homodimer.

It carries out the reaction N-acetyl-D-muramate 6-phosphate + H2O = N-acetyl-D-glucosamine 6-phosphate + (R)-lactate. It functions in the pathway amino-sugar metabolism; 1,6-anhydro-N-acetylmuramate degradation. It participates in amino-sugar metabolism; N-acetylmuramate degradation. Its pathway is cell wall biogenesis; peptidoglycan recycling. Functionally, specifically catalyzes the cleavage of the D-lactyl ether substituent of MurNAc 6-phosphate, producing GlcNAc 6-phosphate and D-lactate. Together with AnmK, is also required for the utilization of anhydro-N-acetylmuramic acid (anhMurNAc) either imported from the medium or derived from its own cell wall murein, and thus plays a role in cell wall recycling. The polypeptide is N-acetylmuramic acid 6-phosphate etherase (Escherichia coli O157:H7 (strain EC4115 / EHEC)).